A 276-amino-acid polypeptide reads, in one-letter code: Elongation factor Ts, mitochondrial (276 aa).

This sequence belongs to the EF-Ts family.

It is found in the mitochondrion. Associates with the EF-Tu.GDP complex and induces the exchange of GDP to GTP. It remains bound to the aminoacyl-tRNA.EF-Tu.GTP complex up to the GTP hydrolysis stage on the ribosome. The polypeptide is Elongation factor Ts, mitochondrial (Leishmania braziliensis).